A 360-amino-acid chain; its full sequence is Thioredoxin domain-containing protein 15 (360 aa).

The signal sequence occupies residues 1 to 32; that stretch reads MVPAAGRRPPRVMRLLGWWQVLLWVLGLPVRG. Residues 33 to 321 lie on the Extracellular side of the membrane; it reads VEVAEESGRL…GPLPSTLIKS (289 aa). The tract at residues 141-173 is disordered; that stretch reads PDREEEYYTEPEVAESDAAPTEDSNNTESLKSP. A compositionally biased stretch (acidic residues) spans 143–155; that stretch reads REEEYYTEPEVAE. The Thioredoxin domain occupies 153 to 296; sequence VAESDAAPTE…LKIFIFNQTG (144 aa). Residues Asn-187, Asn-194, Asn-206, and Asn-293 are each glycosylated (N-linked (GlcNAc...) asparagine). Residues 322 to 342 form a helical membrane-spanning segment; it reads VDWLLVFSLFFLISFIMYATI. At 343 to 360 the chain is on the cytoplasmic side; it reads RTESIRWLIPGQEQEHVE.

It is found in the cell projection. It localises to the cilium membrane. In terms of biological role, acts as a positive regulator of ciliary hedgehog signaling. Involved in ciliogenesis. The protein is Thioredoxin domain-containing protein 15 (TXNDC15) of Homo sapiens (Human).